A 509-amino-acid polypeptide reads, in one-letter code: Photosystem II CP47 reaction center protein (509 aa).

6 consecutive transmembrane segments (helical) span residues 21 to 36, 101 to 115, 140 to 156, 203 to 218, 237 to 252, and 457 to 472; these read SVHL…WAGS, IVLS…VWHW, GIHL…FGAF, IAAG…FHLT, VLSS…AFVV, and VFAL…HGAR.

This sequence belongs to the PsbB/PsbC family. PsbB subfamily. As to quaternary structure, PSII is composed of 1 copy each of membrane proteins PsbA, PsbB, PsbC, PsbD, PsbE, PsbF, PsbH, PsbI, PsbJ, PsbK, PsbL, PsbM, PsbT, PsbX, PsbY, PsbZ, Psb30/Ycf12, peripheral proteins PsbO, CyanoQ (PsbQ), PsbU, PsbV and a large number of cofactors. It forms dimeric complexes. The cofactor is Binds multiple chlorophylls. PSII binds additional chlorophylls, carotenoids and specific lipids..

The protein localises to the cellular thylakoid membrane. In terms of biological role, one of the components of the core complex of photosystem II (PSII). It binds chlorophyll and helps catalyze the primary light-induced photochemical processes of PSII. PSII is a light-driven water:plastoquinone oxidoreductase, using light energy to abstract electrons from H(2)O, generating O(2) and a proton gradient subsequently used for ATP formation. This Nostoc sp. (strain PCC 7120 / SAG 25.82 / UTEX 2576) protein is Photosystem II CP47 reaction center protein.